The following is a 504-amino-acid chain: WD repeat-containing protein 55 homolog (504 aa).

Over residues 32–49 (QEVVNESDSEIGEYDLGD) the composition is skewed to acidic residues. A disordered region spans residues 32 to 135 (QEVVNESDSE…NAFDMDEDDE (104 aa)). Polar residues predominate over residues 66–76 (DSISSDGSFNP). The segment covering 77-95 (NDEDSDTDSDDSMLDEPDE) has biased composition (acidic residues). Residues 114-124 (SGSSNRNQDSD) show a composition bias toward polar residues. WD repeat units lie at residues 158-197 (KLEDFITDICFHPERHIIALATIIGDVHLYEYSNEENKLL), 202-241 (VHAKACRDVEFTEDGRSLITCSKDKSVMITDMETEKLKKL), 245-283 (AHDDAINKLLVLDERLFASGDDSGTVKLWDFRTKDSIFE), 286-325 (EIEDQVTQMITNDQKKLLLATSADGYLTTFNIGARKLYVQ), 328-367 (PYEEELNCMGIYRGNSKLVVGTSKGRLYSYNWGYFGYHCD), and 412-451 (QHNMPIESMDINTNGELLASSSHNNDVRFWNVKYFEDFGD). Residues 484 to 504 (AKEDNNDNENDDATAGPSNTT) form a disordered region.

The protein belongs to the WD repeat WDR55 family.

In Drosophila willistoni (Fruit fly), this protein is WD repeat-containing protein 55 homolog.